Here is a 556-residue protein sequence, read N- to C-terminus: Membrane protein insertase YidC (556 aa).

A run of 5 helical transmembrane segments spans residues 6 to 26 (IVLY…WQID), 332 to 352 (LDLT…FSLM), 358 to 378 (VVGN…LAFY), 428 to 448 (LGGC…YWVL), and 501 to 521 (VMMF…SGLV).

It belongs to the OXA1/ALB3/YidC family. Type 1 subfamily. Interacts with the Sec translocase complex via SecD. Specifically interacts with transmembrane segments of nascent integral membrane proteins during membrane integration.

The protein resides in the cell inner membrane. In terms of biological role, required for the insertion and/or proper folding and/or complex formation of integral membrane proteins into the membrane. Involved in integration of membrane proteins that insert both dependently and independently of the Sec translocase complex, as well as at least some lipoproteins. Aids folding of multispanning membrane proteins. In Legionella pneumophila (strain Paris), this protein is Membrane protein insertase YidC.